The primary structure comprises 102 residues: NADH-quinone oxidoreductase subunit K (102 aa).

3 helical membrane passes run 6–26 (MEHGLLLAAILFCIGLCGLLI), 30–50 (LLFILMSIEIMMNASALAFVV), and 65–85 (ILVISLAAAEASIGLALLLLL).

Belongs to the complex I subunit 4L family. NDH-1 is composed of 14 different subunits. Subunits NuoA, H, J, K, L, M, N constitute the membrane sector of the complex.

The protein resides in the cell inner membrane. The enzyme catalyses a quinone + NADH + 5 H(+)(in) = a quinol + NAD(+) + 4 H(+)(out). Functionally, NDH-1 shuttles electrons from NADH, via FMN and iron-sulfur (Fe-S) centers, to quinones in the respiratory chain. The immediate electron acceptor for the enzyme in this species is believed to be ubiquinone. Couples the redox reaction to proton translocation (for every two electrons transferred, four hydrogen ions are translocated across the cytoplasmic membrane), and thus conserves the redox energy in a proton gradient. The protein is NADH-quinone oxidoreductase subunit K of Aeromonas salmonicida (strain A449).